We begin with the raw amino-acid sequence, 323 residues long: Phosphate acyltransferase (323 aa).

Belongs to the PlsX family. Homodimer. Probably interacts with PlsY.

The protein localises to the cytoplasm. The enzyme catalyses a fatty acyl-[ACP] + phosphate = an acyl phosphate + holo-[ACP]. Its pathway is lipid metabolism; phospholipid metabolism. Functionally, catalyzes the reversible formation of acyl-phosphate (acyl-PO(4)) from acyl-[acyl-carrier-protein] (acyl-ACP). This enzyme utilizes acyl-ACP as fatty acyl donor, but not acyl-CoA. This Finegoldia magna (strain ATCC 29328 / DSM 20472 / WAL 2508) (Peptostreptococcus magnus) protein is Phosphate acyltransferase.